The sequence spans 685 residues: Bifunctional diguanylate cyclase/cyclic di-GMP phosphodiesterase MucR (685 aa).

Residues 6-199 enclose the MHYT domain; sequence YNQVLVAFSL…YTGMAAAQFP (194 aa). Transmembrane regions (helical) follow at residues 9–29, 44–64, 77–97, 117–137, 141–161, 175–195, and 214–234; these read VLVA…LDMA, LIGG…VGML, GLTL…LWLV, GIAA…GIVY, WLGL…WIAF, AGAA…GMAA, and GWLA…ALIV. Residues 235–685 lie on the Cytoplasmic side of the membrane; it reads SVLDSRLEAR…PAEQLLASVA (451 aa). One can recognise a GGDEF domain in the interval 293 to 425; sequence RRFAVLFMDL…GRNGYCFFES (133 aa). One can recognise an EAL domain in the interval 434–685; the sequence is QLQLLHDLRQ…PAEQLLASVA (252 aa). 3',3'-c-di-GMP-binding residues include glutamine 455, glutamate 469, leucine 472, arginine 473, asparagine 528, and glutamine 533. Glutamate 469 contacts Mg(2+). Asparagine 528 is a Mg(2+) binding site. Glutamate 560, aspartate 590, and aspartate 591 together coordinate Mg(2+). Residue aspartate 590 coordinates 3',3'-c-di-GMP. Arginine 614 is a 3',3'-c-di-GMP binding site. Mg(2+) is bound at residue glutamate 647. Positions 650 and 669 each coordinate 3',3'-c-di-GMP.

Homodimer. The cofactor is Mg(2+).

Its subcellular location is the cell inner membrane. It catalyses the reaction 2 GTP = 3',3'-c-di-GMP + 2 diphosphate. It carries out the reaction 3',3'-c-di-GMP + H2O = 5'-phosphoguanylyl(3'-&gt;5')guanosine + H(+). Its function is as follows. Displays both diguanylate cyclase (DGC) and c-di-GMP-specific phosphodiesterase (PDE) activity. Probably modulates DGC and PDE activities, and thus c-di-GMP levels, in a growth mode-dependent manner. May act as a PDE under planktonic growth conditions and as a DGC in biofilms. During biofilm formation, it specifically activates alginate biosynthesis via generation of a localized c-di-GMP pool in the vicinity of the alginate biosynthesis protein Alg44. This Pseudomonas aeruginosa (strain ATCC 15692 / DSM 22644 / CIP 104116 / JCM 14847 / LMG 12228 / 1C / PRS 101 / PAO1) protein is Bifunctional diguanylate cyclase/cyclic di-GMP phosphodiesterase MucR.